The primary structure comprises 312 residues: tRNA uridine(34) hydroxylase (312 aa).

The Rhodanese domain maps to 145–235; it reads ENKNSVLVDM…GIIKYVRDAR (91 aa). Residue cysteine 199 is the Cysteine persulfide intermediate of the active site.

The protein belongs to the TrhO family.

It catalyses the reaction uridine(34) in tRNA + AH2 + O2 = 5-hydroxyuridine(34) in tRNA + A + H2O. In terms of biological role, catalyzes oxygen-dependent 5-hydroxyuridine (ho5U) modification at position 34 in tRNAs. The chain is tRNA uridine(34) hydroxylase from Buchnera aphidicola subsp. Baizongia pistaciae (strain Bp).